We begin with the raw amino-acid sequence, 282 residues long: Probable septum site-determining protein MinC (282 aa).

The disordered stretch occupies residues 108 to 127 (AAARSADEESANAAAAAPAA). The segment covering 118-127 (ANAAAAAPAA) has biased composition (low complexity).

This sequence belongs to the MinC family. Interacts with MinD and FtsZ.

In terms of biological role, cell division inhibitor that blocks the formation of polar Z ring septums. Rapidly oscillates between the poles of the cell to destabilize FtsZ filaments that have formed before they mature into polar Z rings. Prevents FtsZ polymerization. This chain is Probable septum site-determining protein MinC, found in Paraburkholderia xenovorans (strain LB400).